Reading from the N-terminus, the 118-residue chain is uncharacterized protein (118 aa).

An N-terminal signal peptide occupies residues 1-27 (MPIKEPDVWALIWSWLQTNLSSSSAQS).

This is an uncharacterized protein from Haemophilus influenzae (strain ATCC 51907 / DSM 11121 / KW20 / Rd).